A 397-amino-acid polypeptide reads, in one-letter code: Galactokinase (397 aa).

The segment at 1-27 (MGEAVGEPSASGSGSCTGRSRRGCGRR) is disordered. A compositionally biased stretch (low complexity) spans 9–18 (SASGSGSCTG). Substrate is bound at residue 36–39 (EHTD). ATP is bound by residues serine 69 and 124 to 130 (GAGLSSS). Mg(2+)-binding residues include serine 130 and glutamate 161. The active-site Proton acceptor is the aspartate 173. Tyrosine 225 is a substrate binding site.

It belongs to the GHMP kinase family. GalK subfamily.

The protein localises to the cytoplasm. The catalysed reaction is alpha-D-galactose + ATP = alpha-D-galactose 1-phosphate + ADP + H(+). It functions in the pathway carbohydrate metabolism; galactose metabolism. Functionally, catalyzes the transfer of the gamma-phosphate of ATP to D-galactose to form alpha-D-galactose-1-phosphate (Gal-1-P). In Streptomyces lividans, this protein is Galactokinase.